Reading from the N-terminus, the 247-residue chain is Orotidine 5'-phosphate decarboxylase (247 aa).

Residues Asp-22, Lys-44, 71 to 80 (DLKFHDIPNT), Thr-131, Arg-192, Gln-201, Gly-221, and Arg-222 contribute to the substrate site. Lys-73 acts as the Proton donor in catalysis.

This sequence belongs to the OMP decarboxylase family. Type 1 subfamily. Homodimer.

The enzyme catalyses orotidine 5'-phosphate + H(+) = UMP + CO2. It functions in the pathway pyrimidine metabolism; UMP biosynthesis via de novo pathway; UMP from orotate: step 2/2. In terms of biological role, catalyzes the decarboxylation of orotidine 5'-monophosphate (OMP) to uridine 5'-monophosphate (UMP). The protein is Orotidine 5'-phosphate decarboxylase of Pectobacterium atrosepticum (strain SCRI 1043 / ATCC BAA-672) (Erwinia carotovora subsp. atroseptica).